A 434-amino-acid chain; its full sequence is Glutamyl-tRNA reductase (434 aa).

Substrate contacts are provided by residues 49–52 (TCNR), Ser107, 112–114 (EPQ), and Gln118. Cys50 (nucleophile) is an active-site residue. 187–192 (GAGETV) is an NADP(+) binding site.

This sequence belongs to the glutamyl-tRNA reductase family. Homodimer.

The enzyme catalyses (S)-4-amino-5-oxopentanoate + tRNA(Glu) + NADP(+) = L-glutamyl-tRNA(Glu) + NADPH + H(+). It participates in porphyrin-containing compound metabolism; protoporphyrin-IX biosynthesis; 5-aminolevulinate from L-glutamyl-tRNA(Glu): step 1/2. Its function is as follows. Catalyzes the NADPH-dependent reduction of glutamyl-tRNA(Glu) to glutamate 1-semialdehyde (GSA). This is Glutamyl-tRNA reductase from Hydrogenovibrio crunogenus (strain DSM 25203 / XCL-2) (Thiomicrospira crunogena).